The following is a 692-amino-acid chain: Methionine--tRNA ligase (692 aa).

The 'HIGH' region motif lies at 12–22; it reads PYANGSFHIGH. Cys-143, Cys-146, Cys-156, and Cys-159 together coordinate Zn(2+). The 'KMSKS' region signature appears at 341–345; that stretch reads KMSKS. Residue Lys-344 coordinates ATP. The region spanning 586-692 is the tRNA-binding domain; that stretch reads DFAKIDLRIA…PGAQPGMRVR (107 aa).

Belongs to the class-I aminoacyl-tRNA synthetase family. MetG type 1 subfamily. Homodimer. Zn(2+) serves as cofactor.

It localises to the cytoplasm. It carries out the reaction tRNA(Met) + L-methionine + ATP = L-methionyl-tRNA(Met) + AMP + diphosphate. Functionally, is required not only for elongation of protein synthesis but also for the initiation of all mRNA translation through initiator tRNA(fMet) aminoacylation. This is Methionine--tRNA ligase from Bordetella parapertussis (strain 12822 / ATCC BAA-587 / NCTC 13253).